The sequence spans 280 residues: Putative high affinity immunoglobulin gamma Fc receptor IB (280 aa).

An N-terminal signal peptide occupies residues 1–15 (MWFLTTLLLWVPVDG). At 16-198 (QVDTTKAVIT…LQLPTPVWFH (183 aa)) the chain is on the extracellular side. Ig-like C2-type domains are found at residues 22–101 (AVIT…LEIH) and 95–184 (PIQL…ISQY). 2 disulfide bridges follow: C43–C85 and C124–C168. N-linked (GlcNAc...) asparagine glycans are attached at residues N59, N152, and N163. The chain crosses the membrane as a helical span at residues 199-219 (VLFYLAVGIMFLVNTVLWVTI). Residues 220-280 (RKELKRKKKW…VHRKEPQGAT (61 aa)) lie on the Cytoplasmic side of the membrane. Residues 258–280 (KCQEQKEEQLQEGVHRKEPQGAT) are disordered.

It belongs to the immunoglobulin superfamily. FCGR1 family.

The protein resides in the cell membrane. Its function is as follows. May bind to the Fc region of immunoglobulins gamma with a low affinity compared to FCGR1A. May function in the humoral immune response. This is Putative high affinity immunoglobulin gamma Fc receptor IB from Homo sapiens (Human).